The sequence spans 452 residues: Maltoporin (452 aa).

An N-terminal signal peptide occupies residues 1–25 (MMITLRKLPLAVAVAAGVMSAQAMA).

This sequence belongs to the porin LamB (TC 1.B.3) family. In terms of assembly, homotrimer formed of three 18-stranded antiparallel beta-barrels, containing three independent channels.

Its subcellular location is the cell outer membrane. The enzyme catalyses beta-maltose(in) = beta-maltose(out). In terms of biological role, involved in the transport of maltose and maltodextrins. The polypeptide is Maltoporin (Salmonella choleraesuis (strain SC-B67)).